Here is a 349-residue protein sequence, read N- to C-terminus: Tetraacyldisaccharide 4'-kinase (349 aa).

58 to 65 (TAGGSGKT) lines the ATP pocket.

This sequence belongs to the LpxK family.

The catalysed reaction is a lipid A disaccharide + ATP = a lipid IVA + ADP + H(+). The protein operates within glycolipid biosynthesis; lipid IV(A) biosynthesis; lipid IV(A) from (3R)-3-hydroxytetradecanoyl-[acyl-carrier-protein] and UDP-N-acetyl-alpha-D-glucosamine: step 6/6. Functionally, transfers the gamma-phosphate of ATP to the 4'-position of a tetraacyldisaccharide 1-phosphate intermediate (termed DS-1-P) to form tetraacyldisaccharide 1,4'-bis-phosphate (lipid IVA). This Shewanella amazonensis (strain ATCC BAA-1098 / SB2B) protein is Tetraacyldisaccharide 4'-kinase.